Consider the following 217-residue polypeptide: Zinc finger CCHC-type and RNA-binding motif-containing protein 1 (217 aa).

The region spanning 10–88 (STVYVSNLPF…RVIKASIAID (79 aa)) is the RRM domain. Residues 105 to 122 (SKCYECGESGHLSYACPK) form a CCHC-type zinc finger. A disordered region spans residues 120 to 217 (CPKNMLGERE…YFSDEEELSD (98 aa)). Residues 145 to 163 (PEEEIEEVEESEDEGEDPA) are compositionally biased toward acidic residues. 3 positions are modified to phosphoserine: Ser155, Ser210, and Ser216.

As to quaternary structure, component of the U11/U12 snRNPs that are part of the U12-type spliceosome. Interacts with ZRSR1.

The protein localises to the nucleus. It localises to the nucleoplasm. The sequence is that of Zinc finger CCHC-type and RNA-binding motif-containing protein 1 (ZCRB1) from Bos taurus (Bovine).